Here is a 154-residue protein sequence, read N- to C-terminus: MGRLISVRFSLLVVFLSLSGIGAGLCCPLGWSSFDQHCYKVFEPVKNWTEAEEICMQQHKGSRLASIHGSEEEAFVSKLASKALKFTSMWIGLNNPWKDCKWEWSDNARFDYKAWKRRPYCTVMVVKPDRIFWFTRGCEKSVSFVCKFLTDPAV.

A signal peptide spans 1–26 (MGRLISVRFSLLVVFLSLSGIGAGLC). Cys27 and Cys38 are joined by a disulfide. A C-type lectin domain is found at 34–147 (FDQHCYKVFE…CEKSVSFVCK (114 aa)). Asn47 is a glycosylation site (N-linked (GlcNAc...) asparagine). 2 disulfide bridges follow: Cys55/Cys146 and Cys121/Cys138.

The protein belongs to the snaclec family. In terms of assembly, heterodimer of subunits A and B; disulfide-linked. Expressed by the venom gland.

The protein resides in the secreted. Functionally, EMS16 is a potent and selective inhibitor of alpha-2/beta-1 (ITGA2/ITGB1) integrin and acts as a potent antagonist of platelet aggregation and cell migration. Binds specifically to the I domain of the alpha-2 subunit, in a metal ion-independent fashion. The sequence is that of Snaclec EMS16 subunit beta from Echis multisquamatus (Central Asian sand viper).